We begin with the raw amino-acid sequence, 339 residues long: tRNA (cytidine(56)-2'-O)-methyltransferase (339 aa).

S-adenosyl-L-methionine-binding positions include Leu-79 and Gly-105–Val-109. Residues Leu-188 to Gly-295 enclose the HD domain.

Belongs to the aTrm56 family. Homodimer.

It localises to the cytoplasm. The enzyme catalyses cytidine(56) in tRNA + S-adenosyl-L-methionine = 2'-O-methylcytidine(56) in tRNA + S-adenosyl-L-homocysteine + H(+). In terms of biological role, specifically catalyzes the AdoMet-dependent 2'-O-ribose methylation of cytidine at position 56 in tRNAs. In Thermoplasma acidophilum (strain ATCC 25905 / DSM 1728 / JCM 9062 / NBRC 15155 / AMRC-C165), this protein is tRNA (cytidine(56)-2'-O)-methyltransferase.